Here is a 361-residue protein sequence, read N- to C-terminus: Feruloyl CoA ortho-hydroxylase 2 (361 aa).

Residues 211 to 312 form the Fe2OG dioxygenase domain; sequence GSTRINLNYY…RISVPIFVSP (102 aa). Tyr220 is a 2-oxoglutarate binding site. Fe cation contacts are provided by His235, Asp237, and His293. Residues Arg303 and Ser305 each coordinate 2-oxoglutarate.

This sequence belongs to the iron/ascorbate-dependent oxidoreductase family. The cofactor is L-ascorbate. Fe(2+) serves as cofactor. In terms of tissue distribution, low expression in roots.

It catalyses the reaction (E)-feruloyl-CoA + 2-oxoglutarate + O2 = (E)-6-hydroxyferuloyl-CoA + succinate + CO2. The enzyme catalyses (E)-6-hydroxyferuloyl-CoA = scopoletin + CoA. Functionally, 2-oxoglutarate (OG)- and Fe(II)-dependent dioxygenase (2OGD)involved in scopoletin biosynthesis. Converts feruloyl CoA into 6'-hydroxyferuloyl CoA but has no activity with ferulic acid, feruloylquinic acid, caffeic acid, caffeoyl CoA, p-coumaric acid, cinnamic acid, cinnamoyl CoA or benzoyl CoA. The protein is Feruloyl CoA ortho-hydroxylase 2 of Arabidopsis thaliana (Mouse-ear cress).